A 457-amino-acid polypeptide reads, in one-letter code: Methylenetetrahydrofolate--tRNA-(uracil-5-)-methyltransferase TrmFO (457 aa).

12 to 17 (GGGLAG) lines the FAD pocket.

It belongs to the MnmG family. TrmFO subfamily. FAD serves as cofactor.

Its subcellular location is the cytoplasm. It catalyses the reaction uridine(54) in tRNA + (6R)-5,10-methylene-5,6,7,8-tetrahydrofolate + NADH + H(+) = 5-methyluridine(54) in tRNA + (6S)-5,6,7,8-tetrahydrofolate + NAD(+). The enzyme catalyses uridine(54) in tRNA + (6R)-5,10-methylene-5,6,7,8-tetrahydrofolate + NADPH + H(+) = 5-methyluridine(54) in tRNA + (6S)-5,6,7,8-tetrahydrofolate + NADP(+). Its function is as follows. Catalyzes the folate-dependent formation of 5-methyl-uridine at position 54 (M-5-U54) in all tRNAs. The polypeptide is Methylenetetrahydrofolate--tRNA-(uracil-5-)-methyltransferase TrmFO (Myxococcus xanthus (strain DK1622)).